The following is a 589-amino-acid chain: Proline--tRNA ligase (589 aa).

Belongs to the class-II aminoacyl-tRNA synthetase family. ProS type 1 subfamily. As to quaternary structure, homodimer.

It localises to the cytoplasm. The enzyme catalyses tRNA(Pro) + L-proline + ATP = L-prolyl-tRNA(Pro) + AMP + diphosphate. Catalyzes the attachment of proline to tRNA(Pro) in a two-step reaction: proline is first activated by ATP to form Pro-AMP and then transferred to the acceptor end of tRNA(Pro). As ProRS can inadvertently accommodate and process non-cognate amino acids such as alanine and cysteine, to avoid such errors it has two additional distinct editing activities against alanine. One activity is designated as 'pretransfer' editing and involves the tRNA(Pro)-independent hydrolysis of activated Ala-AMP. The other activity is designated 'posttransfer' editing and involves deacylation of mischarged Ala-tRNA(Pro). The misacylated Cys-tRNA(Pro) is not edited by ProRS. The chain is Proline--tRNA ligase from Gloeobacter violaceus (strain ATCC 29082 / PCC 7421).